We begin with the raw amino-acid sequence, 446 residues long: Casein kinase I homolog 1 (446 aa).

The region spanning 12–274 (YKVGRRIGEG…FDATPDYDYL (263 aa)) is the Protein kinase domain. ATP contacts are provided by residues 18–26 (IGEGSFGVI) and Lys-41. Residue Asp-131 is the Proton acceptor of the active site. Residues 308–430 (KSRNAETENQ…ETEAPKKKKS (123 aa)) are disordered. Residue Ser-329 is modified to Phosphoserine. The span at 332–345 (PALQNHASTQNVVS) shows a compositional bias: polar residues. The span at 346–355 (KRSDYEKPFA) shows a compositional bias: basic and acidic residues. Over residues 360–397 (NSASDSAEPNQNSLPNPPTETKATTTVPDRSGLATNQP) the composition is skewed to polar residues. The span at 401–412 (DVHDSSEERVTR) shows a compositional bias: basic and acidic residues.

Belongs to the protein kinase superfamily. CK1 Ser/Thr protein kinase family. Casein kinase I subfamily.

The protein localises to the cytoplasm. The enzyme catalyses L-seryl-[protein] + ATP = O-phospho-L-seryl-[protein] + ADP + H(+). The catalysed reaction is L-threonyl-[protein] + ATP = O-phospho-L-threonyl-[protein] + ADP + H(+). Casein kinases are operationally defined by their preferential utilization of acidic proteins such as caseins as substrates. This Schizosaccharomyces pombe (strain 972 / ATCC 24843) (Fission yeast) protein is Casein kinase I homolog 1 (cki1).